The sequence spans 198 residues: uncharacterized protein (198 aa).

It localises to the plastid. Its subcellular location is the chloroplast. This is an uncharacterized protein from Antithamnion sp. (Red alga).